The chain runs to 510 residues: Bifunctional purine biosynthesis protein PurH (510 aa).

The 145-residue stretch at 1-145 (MTKRALLSVS…KNFAAVLPIV (145 aa)) folds into the MGS-like domain.

Belongs to the PurH family.

The catalysed reaction is (6R)-10-formyltetrahydrofolate + 5-amino-1-(5-phospho-beta-D-ribosyl)imidazole-4-carboxamide = 5-formamido-1-(5-phospho-D-ribosyl)imidazole-4-carboxamide + (6S)-5,6,7,8-tetrahydrofolate. It carries out the reaction IMP + H2O = 5-formamido-1-(5-phospho-D-ribosyl)imidazole-4-carboxamide. It functions in the pathway purine metabolism; IMP biosynthesis via de novo pathway; 5-formamido-1-(5-phospho-D-ribosyl)imidazole-4-carboxamide from 5-amino-1-(5-phospho-D-ribosyl)imidazole-4-carboxamide (10-formyl THF route): step 1/1. It participates in purine metabolism; IMP biosynthesis via de novo pathway; IMP from 5-formamido-1-(5-phospho-D-ribosyl)imidazole-4-carboxamide: step 1/1. This chain is Bifunctional purine biosynthesis protein PurH, found in Lactiplantibacillus plantarum (strain ATCC BAA-793 / NCIMB 8826 / WCFS1) (Lactobacillus plantarum).